The following is a 246-amino-acid chain: Zinc import ATP-binding protein ZnuC (246 aa).

Residues Leu-24–Tyr-243 enclose the ABC transporter domain. Gly-56–Thr-63 lines the ATP pocket.

This sequence belongs to the ABC transporter superfamily. Zinc importer (TC 3.A.1.15.5) family. The complex is composed of two ATP-binding proteins (ZnuC), two transmembrane proteins (ZnuB) and a solute-binding protein (ZnuA).

It localises to the cell membrane. It carries out the reaction Zn(2+)(out) + ATP(in) + H2O(in) = Zn(2+)(in) + ADP(in) + phosphate(in) + H(+)(in). In terms of biological role, part of the ABC transporter complex ZnuABC involved in zinc import. Responsible for energy coupling to the transport system. This is Zinc import ATP-binding protein ZnuC from Wolbachia pipientis wMel.